A 109-amino-acid polypeptide reads, in one-letter code: Flagellar hook-basal body complex protein FliE (109 aa).

The segment at 1–38 (MQAIHNDKSLLSPFSELNTDNRTKREESGSTFKEQKGG) is disordered. The span at 19-38 (TDNRTKREESGSTFKEQKGG) shows a compositional bias: basic and acidic residues.

This sequence belongs to the FliE family.

Its subcellular location is the bacterial flagellum basal body. This is Flagellar hook-basal body complex protein FliE from Helicobacter pylori (strain P12).